We begin with the raw amino-acid sequence, 124 residues long: Small ribosomal subunit protein uS13 (124 aa).

The segment at 94–124 is disordered; it reads GLPLRGQRTKNNSRTRKGRRKTVANKKKATK. A compositionally biased stretch (basic residues) spans 100-124; the sequence is QRTKNNSRTRKGRRKTVANKKKATK.

Belongs to the universal ribosomal protein uS13 family. As to quaternary structure, part of the 30S ribosomal subunit. Forms a loose heterodimer with protein S19. Forms two bridges to the 50S subunit in the 70S ribosome.

Functionally, located at the top of the head of the 30S subunit, it contacts several helices of the 16S rRNA. In the 70S ribosome it contacts the 23S rRNA (bridge B1a) and protein L5 of the 50S subunit (bridge B1b), connecting the 2 subunits; these bridges are implicated in subunit movement. Contacts the tRNAs in the A and P-sites. This is Small ribosomal subunit protein uS13 from Christiangramia forsetii (strain DSM 17595 / CGMCC 1.15422 / KT0803) (Gramella forsetii).